Here is a 235-residue protein sequence, read N- to C-terminus: uncharacterized protein (235 aa).

This is an uncharacterized protein from Bacillus subtilis (strain 168).